Consider the following 83-residue polypeptide: Probable calcium-binding protein CML28 (83 aa).

EF-hand domains follow at residues 5-40 (TEKAEHDRIFKKFDANGDGKISAAELGDALKNLGSV) and 43-75 (EDIKRMMAEIDTDGDGYISYQEFIDFASANRGL). Asp-18, Asn-20, Asp-22, Lys-24, Glu-29, Asp-53, Asp-55, Asp-57, Tyr-59, and Glu-64 together coordinate Ca(2+).

Functionally, potential calcium sensor. The sequence is that of Probable calcium-binding protein CML28 (CML28) from Arabidopsis thaliana (Mouse-ear cress).